The sequence spans 353 residues: Photosystem II protein D1 (353 aa).

The residue at position 2 (threonine 2) is an N-acetylthreonine. Threonine 2 carries the post-translational modification Phosphothreonine. The next 3 helical transmembrane spans lie at 29–46, 118–133, and 142–156; these read YIGW…TATS, HFLL…EWEL, and WIAV…AATA. Residue histidine 118 participates in chlorophyll a binding. A pheophytin a-binding site is contributed by tyrosine 126. [CaMn4O5] cluster-binding residues include aspartate 170 and glutamate 189. Residues 197–218 traverse the membrane as a helical segment; sequence FHMLGVAGVFGGSLFSAMHGSL. Histidine 198 is a binding site for chlorophyll a. Residues histidine 215 and 264–265 contribute to the a quinone site; that span reads SF. Histidine 215 provides a ligand contact to Fe cation. Histidine 272 provides a ligand contact to Fe cation. A helical transmembrane segment spans residues 274-288; that stretch reads FLAAWPVVGIWFTAL. The [CaMn4O5] cluster site is built by histidine 332, glutamate 333, aspartate 342, and alanine 344. Residues 345–353 constitute a propeptide that is removed on maturation; sequence AVEAPSING.

The protein belongs to the reaction center PufL/M/PsbA/D family. As to quaternary structure, PSII is composed of 1 copy each of membrane proteins PsbA, PsbB, PsbC, PsbD, PsbE, PsbF, PsbH, PsbI, PsbJ, PsbK, PsbL, PsbM, PsbT, PsbX, PsbY, PsbZ, Psb30/Ycf12, at least 3 peripheral proteins of the oxygen-evolving complex and a large number of cofactors. It forms dimeric complexes. It depends on The D1/D2 heterodimer binds P680, chlorophylls that are the primary electron donor of PSII, and subsequent electron acceptors. It shares a non-heme iron and each subunit binds pheophytin, quinone, additional chlorophylls, carotenoids and lipids. D1 provides most of the ligands for the Mn4-Ca-O5 cluster of the oxygen-evolving complex (OEC). There is also a Cl(-1) ion associated with D1 and D2, which is required for oxygen evolution. The PSII complex binds additional chlorophylls, carotenoids and specific lipids. as a cofactor. In terms of processing, tyr-161 forms a radical intermediate that is referred to as redox-active TyrZ, YZ or Y-Z. C-terminally processed by CTPA; processing is essential to allow assembly of the oxygen-evolving complex and thus photosynthetic growth.

The protein localises to the plastid. It is found in the chloroplast thylakoid membrane. It carries out the reaction 2 a plastoquinone + 4 hnu + 2 H2O = 2 a plastoquinol + O2. In terms of biological role, photosystem II (PSII) is a light-driven water:plastoquinone oxidoreductase that uses light energy to abstract electrons from H(2)O, generating O(2) and a proton gradient subsequently used for ATP formation. It consists of a core antenna complex that captures photons, and an electron transfer chain that converts photonic excitation into a charge separation. The D1/D2 (PsbA/PsbD) reaction center heterodimer binds P680, the primary electron donor of PSII as well as several subsequent electron acceptors. This Chloranthus spicatus (Chulantree) protein is Photosystem II protein D1.